The primary structure comprises 455 residues: Zinc finger and BTB domain-containing protein 8A.2 (455 aa).

In terms of domain architecture, BTB spans 24-92 (CDCHIMIDGH…MYSGKLNLSG (69 aa)). 2 C2H2-type zinc fingers span residues 299–321 (FKCP…LLCH) and 327–350 (YPCQ…RTIH).

Its subcellular location is the nucleus. Functionally, may be involved in transcriptional regulation. This is Zinc finger and BTB domain-containing protein 8A.2 (zbtb8a.2) from Xenopus tropicalis (Western clawed frog).